The sequence spans 598 residues: Aspartate--tRNA(Asp/Asn) ligase (598 aa).

E177 serves as a coordination point for L-aspartate. Residues Q201–K204 are aspartate. R223 is an L-aspartate binding site. ATP contacts are provided by residues R223–E225 and Q232. Residue H456 coordinates L-aspartate. E493 lines the ATP pocket. Residue R500 participates in L-aspartate binding. An ATP-binding site is contributed by G545–R548.

It belongs to the class-II aminoacyl-tRNA synthetase family. Type 1 subfamily. Homodimer.

The protein resides in the cytoplasm. The catalysed reaction is tRNA(Asx) + L-aspartate + ATP = L-aspartyl-tRNA(Asx) + AMP + diphosphate. Aspartyl-tRNA synthetase with relaxed tRNA specificity since it is able to aspartylate not only its cognate tRNA(Asp) but also tRNA(Asn). Reaction proceeds in two steps: L-aspartate is first activated by ATP to form Asp-AMP and then transferred to the acceptor end of tRNA(Asp/Asn). This is Aspartate--tRNA(Asp/Asn) ligase from Prochlorococcus marinus (strain AS9601).